The sequence spans 204 residues: LexA repressor (204 aa).

Residues 29–49 constitute a DNA-binding region (H-T-H motif); sequence RAEIADIMGFQSKNAASDHLR. Catalysis depends on for autocatalytic cleavage activity residues Ser123 and Lys160.

The protein belongs to the peptidase S24 family. As to quaternary structure, homodimer.

The catalysed reaction is Hydrolysis of Ala-|-Gly bond in repressor LexA.. Its function is as follows. Represses a number of genes involved in the response to DNA damage (SOS response), including recA and lexA. In the presence of single-stranded DNA, RecA interacts with LexA causing an autocatalytic cleavage which disrupts the DNA-binding part of LexA, leading to derepression of the SOS regulon and eventually DNA repair. The protein is LexA repressor of Alcanivorax borkumensis (strain ATCC 700651 / DSM 11573 / NCIMB 13689 / SK2).